We begin with the raw amino-acid sequence, 334 residues long: Phenylalanine--tRNA ligase alpha subunit (334 aa).

Residue Glu-249 participates in Mg(2+) binding.

The protein belongs to the class-II aminoacyl-tRNA synthetase family. Phe-tRNA synthetase alpha subunit type 1 subfamily. In terms of assembly, tetramer of two alpha and two beta subunits. Mg(2+) serves as cofactor.

It localises to the cytoplasm. The enzyme catalyses tRNA(Phe) + L-phenylalanine + ATP = L-phenylalanyl-tRNA(Phe) + AMP + diphosphate + H(+). This Desulfatibacillum aliphaticivorans protein is Phenylalanine--tRNA ligase alpha subunit.